We begin with the raw amino-acid sequence, 304 residues long: Virulence protein VirA (304 aa).

Could be involved in the biosynthesis of a major surface antigen important for virulence. This is Virulence protein VirA (virA) from Vibrio anguillarum (strain ATCC 68554 / 775) (Listonella anguillarum).